The sequence spans 292 residues: 4-hydroxy-tetrahydrodipicolinate synthase (292 aa).

T45 is a pyruvate binding site. Catalysis depends on Y133, which acts as the Proton donor/acceptor. K162 serves as the catalytic Schiff-base intermediate with substrate. Residue I204 participates in pyruvate binding.

The protein belongs to the DapA family. As to quaternary structure, homotetramer; dimer of dimers.

Its subcellular location is the cytoplasm. It carries out the reaction L-aspartate 4-semialdehyde + pyruvate = (2S,4S)-4-hydroxy-2,3,4,5-tetrahydrodipicolinate + H2O + H(+). Its pathway is amino-acid biosynthesis; L-lysine biosynthesis via DAP pathway; (S)-tetrahydrodipicolinate from L-aspartate: step 3/4. Functionally, catalyzes the condensation of (S)-aspartate-beta-semialdehyde [(S)-ASA] and pyruvate to 4-hydroxy-tetrahydrodipicolinate (HTPA). This Nitratidesulfovibrio vulgaris (strain DSM 19637 / Miyazaki F) (Desulfovibrio vulgaris) protein is 4-hydroxy-tetrahydrodipicolinate synthase.